Here is a 160-residue protein sequence, read N- to C-terminus: MTVKYIRGDLFTHSAPTGKSIVLAHACNTGGSWGGGIAAVFARKYPKANRQYSEYCHKNSHLLGTSLLLKADDYDKSKAYIACLFTSDFNQSPEQIVKYTDQSLQELAKQLKSLPIETQNGNQVVNMPKINSGIFGVPWENTEAVLDKLDSLDFNVYVID.

Residues 1–160 (MTVKYIRGDL…SLDFNVYVID (160 aa)) form the Macro domain. Substrate-binding positions include 8 to 10 (GDL), 26 to 28 (ACN), 33 to 38 (WGGGIA), and 130 to 136 (INSGIFG).

The protein belongs to the POA1 family.

It catalyses the reaction ADP-alpha-D-ribose 1''-phosphate + H2O = ADP-D-ribose + phosphate. Functionally, highly specific phosphatase involved in the metabolism of ADP-ribose 1''-phosphate (Appr1p) which is produced as a consequence of tRNA splicing. Removes ADP-ribose from glutamate residues in proteins bearing a single ADP-ribose moiety. Inactive towards proteins bearing poly-ADP-ribose. In Lodderomyces elongisporus (strain ATCC 11503 / CBS 2605 / JCM 1781 / NBRC 1676 / NRRL YB-4239) (Yeast), this protein is ADP-ribose 1''-phosphate phosphatase (POA1).